We begin with the raw amino-acid sequence, 123 residues long: Sperm-associated antigen 11A (123 aa).

The signal sequence occupies residues 1–25; sequence MRQRLLPSVTSLLLVALLFPGSSQA. N29 carries an N-linked (GlcNAc...) asparagine glycan.

This sequence belongs to the SPAG11 family.

It is found in the secreted. In terms of biological role, has antimicrobial activity against E.coli. Plays a role in the defense response in the male reproductive tract, contributing to sperm maturation, storage and protection. This is Sperm-associated antigen 11A from Homo sapiens (Human).